The primary structure comprises 126 residues: Thioredoxin H-type 1 (126 aa).

Residues Ala2–Ala120 enclose the Thioredoxin domain. Catalysis depends on nucleophile residues Cys46 and Cys49. Cysteines 46 and 49 form a disulfide.

Belongs to the thioredoxin family. Plant H-type subfamily.

It localises to the cytoplasm. Its function is as follows. Participates in various redox reactions through the reversible oxidation of the active center dithiol to a disulfide. The H form is known to activate a number of cytosolic enzymes. The polypeptide is Thioredoxin H-type 1 (Nicotiana tabacum (Common tobacco)).